Here is a 217-residue protein sequence, read N- to C-terminus: Large ribosomal subunit protein bL25 (217 aa).

It belongs to the bacterial ribosomal protein bL25 family. CTC subfamily. As to quaternary structure, part of the 50S ribosomal subunit; part of the 5S rRNA/L5/L18/L25 subcomplex. Contacts the 5S rRNA. Binds to the 5S rRNA independently of L5 and L18.

In terms of biological role, this is one of the proteins that binds to the 5S RNA in the ribosome where it forms part of the central protuberance. This Methylobacterium sp. (strain 4-46) protein is Large ribosomal subunit protein bL25.